The primary structure comprises 385 residues: 1-deoxy-D-xylulose 5-phosphate reductoisomerase (385 aa).

The NADPH site is built by Thr-10, Gly-11, Ser-12, Ile-13, and Asn-124. Lys-125 contacts 1-deoxy-D-xylulose 5-phosphate. Residue Glu-126 participates in NADPH binding. Asp-150 provides a ligand contact to Mn(2+). Residues Ser-151, Glu-152, Ser-176, and His-199 each coordinate 1-deoxy-D-xylulose 5-phosphate. A Mn(2+)-binding site is contributed by Glu-152. Gly-205 provides a ligand contact to NADPH. Residues Ser-212, Asn-217, Lys-218, and Glu-221 each contribute to the 1-deoxy-D-xylulose 5-phosphate site. Glu-221 lines the Mn(2+) pocket.

It belongs to the DXR family. The cofactor is Mg(2+). Requires Mn(2+) as cofactor.

It carries out the reaction 2-C-methyl-D-erythritol 4-phosphate + NADP(+) = 1-deoxy-D-xylulose 5-phosphate + NADPH + H(+). The protein operates within isoprenoid biosynthesis; isopentenyl diphosphate biosynthesis via DXP pathway; isopentenyl diphosphate from 1-deoxy-D-xylulose 5-phosphate: step 1/6. Functionally, catalyzes the NADPH-dependent rearrangement and reduction of 1-deoxy-D-xylulose-5-phosphate (DXP) to 2-C-methyl-D-erythritol 4-phosphate (MEP). In Clostridium botulinum (strain Alaska E43 / Type E3), this protein is 1-deoxy-D-xylulose 5-phosphate reductoisomerase.